The chain runs to 357 residues: Gas vesicle ATPase GvpN (357 aa).

Residues 22–36 (ATSASKNGGRTTPSA) are compositionally biased toward polar residues. The tract at residues 22–43 (ATSASKNGGRTTPSALTPRPRS) is disordered. Residue 72-79 (GPAGTGKT) participates in ATP binding.

The protein belongs to the CbbQ/NirQ/NorQ/GpvN family. As to quaternary structure, forms homodimers, probably interacts with other GV proteins including GvpA.

The protein resides in the gas vesicle. It localises to the cytoplasm. It catalyses the reaction ATP + H2O = ADP + phosphate + H(+). An ATPase that functions in gas vesicle formation. A minor component of the gas vesicle, also found in soluble extracts. Gas vesicles (GV) are hollow, gas filled proteinaceous nanostructures. During planktonic growth they allow positioning of the organism at a favorable depth for light or nutrient acquisition. In Ancylobacter aquaticus, this protein is Gas vesicle ATPase GvpN.